The sequence spans 195 residues: uncharacterized protein (195 aa).

Positions 1–35 are disordered; it reads MASSSSAALRPFGTARLTPGRQTGRQTQQQISAPE. Residues 20 to 30 are compositionally biased toward low complexity; it reads GRQTGRQTQQQ. Residues 76–184 form the MSP domain; that stretch reads GVTVIPRVAR…PASINMALEA (109 aa).

This is an uncharacterized protein from Caenorhabditis elegans.